The primary structure comprises 109 residues: UPF0122 protein CLH_1195 (109 aa).

This sequence belongs to the UPF0122 family.

Functionally, might take part in the signal recognition particle (SRP) pathway. This is inferred from the conservation of its genetic proximity to ftsY/ffh. May be a regulatory protein. This Clostridium botulinum (strain Alaska E43 / Type E3) protein is UPF0122 protein CLH_1195.